A 270-amino-acid chain; its full sequence is MKRSQRMNNSPERHSQYRNEPHYNTYYQPVGKPPKKKKNKRIFLRLFIIFVFIYALFIGLMYYLSSRANVDDLKTIENKSSYVSADNMPDYVKGAFISMEDERFYKHHGFDVKGTTRALFSTIGDRDVQGGSTITQQTVKNYYYDNERSFTRKLKELFVAHKVEQQYSKNEILSFYLNNIYYGSDQYTIESAANYYFGTTVNKNSDSMSQITVLQSAILASKVNAPSVYDISNMSDNFKNRIKTNLEKMKQQEYISDSQYQEALSQLNNY.

A compositionally biased stretch (polar residues) spans M1 to S10. The interval M1 to K36 is disordered. Residues P11 to P21 show a composition bias toward basic and acidic residues. Residues I42–Y62 form a helical membrane-spanning segment.

It belongs to the glycosyltransferase 51 family.

The protein resides in the cell membrane. The catalysed reaction is [GlcNAc-(1-&gt;4)-Mur2Ac(oyl-L-Ala-gamma-D-Glu-L-Lys-D-Ala-D-Ala)](n)-di-trans,octa-cis-undecaprenyl diphosphate + beta-D-GlcNAc-(1-&gt;4)-Mur2Ac(oyl-L-Ala-gamma-D-Glu-L-Lys-D-Ala-D-Ala)-di-trans,octa-cis-undecaprenyl diphosphate = [GlcNAc-(1-&gt;4)-Mur2Ac(oyl-L-Ala-gamma-D-Glu-L-Lys-D-Ala-D-Ala)](n+1)-di-trans,octa-cis-undecaprenyl diphosphate + di-trans,octa-cis-undecaprenyl diphosphate + H(+). Its pathway is cell wall biogenesis; peptidoglycan biosynthesis. Peptidoglycan polymerase that catalyzes glycan chain elongation using lipid-linked disaccharide-pentapeptide as the substrate. In Staphylococcus haemolyticus (strain JCSC1435), this protein is Monofunctional glycosyltransferase.